The chain runs to 130 residues: MDKINKIKINETEYYHSDDILALKMKKFDKCVNGRRLIDDFNIKKPNFIYAAFKDDEWIKTDGRSRKFDKVFVKVSWFENYIQENDSDDDCSENDSDGDCSENDSDNDYSENESDCELYNEKNNKCTRYY.

Residues 85 to 116 (NDSDDDCSENDSDGDCSENDSDNDYSENESDC) are disordered.

This sequence belongs to the mimivirus L5 family.

This is an uncharacterized protein from Acanthamoeba polyphaga mimivirus (APMV).